A 173-amino-acid polypeptide reads, in one-letter code: NADH-ubiquinone oxidoreductase chain 6 (173 aa).

5 helical membrane passes run 1 to 21 (MTYF…AVAS), 27 to 47 (YGVV…LSLG), 48 to 68 (VSFV…VVFV), 91 to 111 (GVSF…IGCL), and 139 to 159 (CGVG…FVVL).

Belongs to the complex I subunit 6 family.

The protein resides in the mitochondrion membrane. It catalyses the reaction a ubiquinone + NADH + 5 H(+)(in) = a ubiquinol + NAD(+) + 4 H(+)(out). In terms of biological role, core subunit of the mitochondrial membrane respiratory chain NADH dehydrogenase (Complex I) that is believed to belong to the minimal assembly required for catalysis. Complex I functions in the transfer of electrons from NADH to the respiratory chain. The immediate electron acceptor for the enzyme is believed to be ubiquinone. The polypeptide is NADH-ubiquinone oxidoreductase chain 6 (MT-ND6) (Fratercula cirrhata (Tufted puffin)).